The primary structure comprises 457 residues: Peptidyl-prolyl cis-trans isomerase FKBP5 (457 aa).

Met-1 carries the N-acetylmethionine modification. Over residues 1–11 (MTTDEGAKNNE) the composition is skewed to basic and acidic residues. Residues 1-24 (MTTDEGAKNNEESPTATVAEQGED) are disordered. Ser-13 is subject to Phosphoserine. Lys-28 is subject to N6-acetyllysine. The PPIase FKBP-type 1 domain maps to 42–130 (NGEETPMIGD…KIPSNATLFF (89 aa)). The residue at position 155 (Lys-155) is an N6-acetyllysine. Positions 157 to 243 (EGYSNPNEGA…GIEPNAELIY (87 aa)) constitute a PPIase FKBP-type 2 domain. 3 TPR repeats span residues 268–301 (AAIVKEKGTVYFKGGKYMQAVIQYGKIVSWLEME), 317–350 (LAAFLNLAMCYLKLREYTKAVECCDKALGLDSAN), and 351–384 (EKGLYRRGEAQLLMNEFESAKGDFEKVLEVNPQN). Residues 420-457 (DAKEEANKAMGKKTSEGVTNEKGTDSQAMEEEKPEGHV) form a disordered region. Ser-445 carries the post-translational modification Phosphoserine.

As to quaternary structure, part of a heteromultimeric cytoplasmic complex with HSP90AA1, HSPA1A/HSPA1B and steroid receptors. Upon ligand binding dissociates from the complex and FKBP4 takes its place. Interacts with functionally mature heterooligomeric progesterone receptor complexes along with HSP90 and TEBP. Interacts with NR3C1. Interacts with Akt/AKT1 and PHLPP1; enhancing dephosphorylation and subsequent activation of Akt/AKT1. Interacts with IFI44L; this interaction modulates the kinase activity of IKBKB and IKBKE. Interacts with IKBKB and IKBKE. Post-translationally, acetylation impairs ability to promote interaction between Akt/AKT1 and PHLPP1. Deacetylation by SIRT7 promotes interaction between Akt/AKT1 and PHLPP1, leading to suppress Akt/AKT1 activation. In terms of processing, ubiquitinated, leading to degradation in a proteasome-dependent manner. Deubiquitinated by USP49, leading to stabilization. As to expression, widely expressed, enriched in testis compared to other tissues.

The protein resides in the cytoplasm. It is found in the nucleus. It catalyses the reaction [protein]-peptidylproline (omega=180) = [protein]-peptidylproline (omega=0). With respect to regulation, inhibited by both FK506 and rapamycin. In terms of biological role, immunophilin protein with PPIase and co-chaperone activities. Component of unligated steroid receptors heterocomplexes through interaction with heat-shock protein 90 (HSP90). Plays a role in the intracellular trafficking of heterooligomeric forms of steroid hormone receptors maintaining the complex into the cytoplasm when unliganded. Acts as a regulator of Akt/AKT1 activity by promoting the interaction between Akt/AKT1 and PHLPP1, thereby enhancing dephosphorylation and subsequent activation of Akt/AKT1. Interacts with IKBKE and IKBKB which facilitates IKK complex assembly leading to increased IKBKE and IKBKB kinase activity, NF-kappa-B activation, and IFN production. This chain is Peptidyl-prolyl cis-trans isomerase FKBP5 (FKBP5), found in Homo sapiens (Human).